Reading from the N-terminus, the 199-residue chain is Probable nicotinate-nucleotide adenylyltransferase (199 aa).

Belongs to the NadD family.

The catalysed reaction is nicotinate beta-D-ribonucleotide + ATP + H(+) = deamido-NAD(+) + diphosphate. Its pathway is cofactor biosynthesis; NAD(+) biosynthesis; deamido-NAD(+) from nicotinate D-ribonucleotide: step 1/1. Catalyzes the reversible adenylation of nicotinate mononucleotide (NaMN) to nicotinic acid adenine dinucleotide (NaAD). In Corynebacterium jeikeium (strain K411), this protein is Probable nicotinate-nucleotide adenylyltransferase.